The following is a 106-amino-acid chain: Small ribosomal subunit protein uS10 (106 aa).

Belongs to the universal ribosomal protein uS10 family. Part of the 30S ribosomal subunit.

Functionally, involved in the binding of tRNA to the ribosomes. The chain is Small ribosomal subunit protein uS10 from Parasynechococcus marenigrum (strain WH8102).